The primary structure comprises 478 residues: MPVDINRLTDGWLELESDPGLFTLLLEDFGVKGVQVEEIYDLQKNIEGPVYGFIFLFRWIEERRARRKIVETTEIYVKDEEAVNNIFFAQQVVPNSCATHALLSVLLNCSDIDLGNTLSRLKVHTKGMCPENKGWAIGNTPELACAHNSHAMPQARRRMDRNSGVSTGRFTGEAFHFVSFVPINGHLFELDGLKPFPMDHGPWGEKEAWTDKFRRVMSDRLGISTGEQDIRFNLMAVVPDRRIAITHKLKMLRTNQTIVSAALEKLLKSKRTESRSLETVDKIKKEEESPVKLSSEYSQLLEMNEKDDSSVPMSKELESLVSLNSSSDSVEIIGETEIKKENPPPSPPPSFIGAGTFSPKDLLSLLKNLESEINITEQHLCDENEKRAMFKVDDCRRTHNYDEFICTFLSMLAHQGELGDLVSQHLITNRKPNMGSVQNSGSRGVVRNYNKKTTTNGSSPKTPSSKRRRGRTKYRKRK.

Positions 11–239 constitute a UCH catalytic domain; that stretch reads GWLELESDPG…IRFNLMAVVP (229 aa). Cysteine 97 acts as the Nucleophile in catalysis. Histidine 176 functions as the Proton donor in the catalytic mechanism. The 29-residue stretch at 400 to 428 folds into the ULD domain; the sequence is NYDEFICTFLSMLAHQGELGDLVSQHLIT. The interval 430–478 is positively charged C-terminal tail required for binding nucleosomes; the sequence is RKPNMGSVQNSGSRGVVRNYNKKTTTNGSSPKTPSSKRRRGRTKYRKRK. The segment covering 432 to 442 has biased composition (polar residues); the sequence is PNMGSVQNSGS. A disordered region spans residues 432–478; sequence PNMGSVQNSGSRGVVRNYNKKTTTNGSSPKTPSSKRRRGRTKYRKRK. Residues 464-478 show a composition bias toward basic residues; the sequence is SSKRRRGRTKYRKRK.

Belongs to the peptidase C12 family. BAP1 subfamily. Catalytic component of the polycomb repressive deubiquitinase (PR-DUB) complex, at least composed of caly/calypso, Asx and sba (MBD5/6 homolog). The PR-DUB complex associates with nucleosomes to mediate deubiquitination of histone H2AK118ub1 substrates; the association requires the positively charged C-terminal tail of caly, probably due to direct binding of DNA. Interacts (via ULD domain) with Asx (via DEUBAD domain); the interaction produces a stable heterodimer with a composite binding site for ubiquitin. Homodimerizes (via coiled-coil hinge-region between the UCH and ULD domains) to mediate assembly of 2 copies of the caly-Asx heterodimer into a bisymmetric tetramer; dimerization enhances PR-DUB association with nucleosomes.

Its subcellular location is the nucleus. It carries out the reaction Thiol-dependent hydrolysis of ester, thioester, amide, peptide and isopeptide bonds formed by the C-terminal Gly of ubiquitin (a 76-residue protein attached to proteins as an intracellular targeting signal).. Functionally, catalytic component of the polycomb repressive deubiquitinase (PR-DUB) complex, a complex that specifically mediates deubiquitination of histone H2A monoubiquitinated at 'Lys-119' (H2AK118ub1). Mediates bisymmetric organization of the PR-DUB complex and is involved in association with nucleosomes to mediate deubiquitination. Does not deubiquitinate monoubiquitinated histone H2B. Required to maintain the transcriptionally repressive state of homeotic genes throughout development. The PR-DUB complex has weak or no activity toward 'Lys-48'- and 'Lys-63'-linked polyubiquitin chains. Polycomb group (PcG) protein. The polypeptide is Ubiquitin carboxyl-terminal hydrolase calypso (Aedes aegypti (Yellowfever mosquito)).